A 457-amino-acid chain; its full sequence is MDAQLNNLWEQALNIIKGEISEISFNTWIKSCTPISISDNILKLSVPNEFTKGILDTRYKDLLIQALKIVTSRKFKIEFYLESDLEEEKENEEKQKEEKKENTNDVDGSIVVSDEMSATLNPKYTFQSFVIGNSNRFAHAASLAVAESPAKAYNPLFIYGGVGLGKTHLMHAIGHYILQENPKAKVVYVSSEKFTNELINAIKDDKNEEFRNKYRKVDVLLIDDIQFIAGKERTQEEFFHTFNALHEENKQIILSSDRPPKEIPTLEDRLRSRFEWGLIADIQPPDFETRMAILKKKADVEGLNVPNEVMVYIATKIKSNIRELEGALIRIIAYSSLTNRDVSVDLASEALKDIISNKESAPVTVKTIQESVANYYNLRIEDLKSQRRTRNIAYPRQIAMYLSRKLTDMSLPKIGEEFGGRDHTTVIHAYEKISENLKTDEGLQSMINDITKKLTQK.

Positions 1-75 are domain I, interacts with DnaA modulators; sequence MDAQLNNLWE…ALKIVTSRKF (75 aa). Residues 75–118 are domain II; that stretch reads FKIEFYLESDLEEEKENEEKQKEEKKENTNDVDGSIVVSDEMSA. A domain III, AAA+ region region spans residues 119 to 335; sequence TLNPKYTFQS…GALIRIIAYS (217 aa). Positions 163, 165, 166, and 167 each coordinate ATP. The segment at 336–457 is domain IV, binds dsDNA; the sequence is SLTNRDVSVD…NDITKKLTQK (122 aa).

Belongs to the DnaA family. As to quaternary structure, oligomerizes as a right-handed, spiral filament on DNA at oriC.

The protein resides in the cytoplasm. In terms of biological role, plays an essential role in the initiation and regulation of chromosomal replication. ATP-DnaA binds to the origin of replication (oriC) to initiate formation of the DNA replication initiation complex once per cell cycle. Binds the DnaA box (a 9 base pair repeat at the origin) and separates the double-stranded (ds)DNA. Forms a right-handed helical filament on oriC DNA; dsDNA binds to the exterior of the filament while single-stranded (ss)DNA is stabiized in the filament's interior. The ATP-DnaA-oriC complex binds and stabilizes one strand of the AT-rich DNA unwinding element (DUE), permitting loading of DNA polymerase. After initiation quickly degrades to an ADP-DnaA complex that is not apt for DNA replication. Binds acidic phospholipids. The polypeptide is Chromosomal replication initiator protein DnaA (Clostridium perfringens (strain ATCC 13124 / DSM 756 / JCM 1290 / NCIMB 6125 / NCTC 8237 / Type A)).